A 254-amino-acid chain; its full sequence is 4-hydroxy-tetrahydrodipicolinate reductase (254 aa).

7–12 is an NAD(+) binding site; the sequence is GASGRI. Residue Arg35 participates in NADP(+) binding. Residues 91–93 and 115–118 contribute to the NAD(+) site; these read GTT and AHNM. His147 serves as the catalytic Proton donor/acceptor. Position 148 (His148) interacts with (S)-2,3,4,5-tetrahydrodipicolinate. Lys151 acts as the Proton donor in catalysis. 157-158 contacts (S)-2,3,4,5-tetrahydrodipicolinate; it reads GT.

The protein belongs to the DapB family.

The protein resides in the cytoplasm. The enzyme catalyses (S)-2,3,4,5-tetrahydrodipicolinate + NAD(+) + H2O = (2S,4S)-4-hydroxy-2,3,4,5-tetrahydrodipicolinate + NADH + H(+). It catalyses the reaction (S)-2,3,4,5-tetrahydrodipicolinate + NADP(+) + H2O = (2S,4S)-4-hydroxy-2,3,4,5-tetrahydrodipicolinate + NADPH + H(+). The protein operates within amino-acid biosynthesis; L-lysine biosynthesis via DAP pathway; (S)-tetrahydrodipicolinate from L-aspartate: step 4/4. Functionally, catalyzes the conversion of 4-hydroxy-tetrahydrodipicolinate (HTPA) to tetrahydrodipicolinate. The polypeptide is 4-hydroxy-tetrahydrodipicolinate reductase (Helicobacter pylori (strain Shi470)).